Reading from the N-terminus, the 766-residue chain is Semaphorin-4E (766 aa).

Residues 1 to 24 form the signal peptide; the sequence is MMSLLAVLCVLYVWSPAMLTGGLG. The Extracellular portion of the chain corresponds to 25–664; sequence STLDSLPRKT…LHHVKEKERT (640 aa). The region spanning 27-499 is the Sema domain; it reads LDSLPRKTVP…SEVGVVQLSI (473 aa). Residue Asn-52 is glycosylated (N-linked (GlcNAc...) asparagine). 4 cysteine pairs are disulfide-bonded: Cys-100-Cys-111, Cys-129-Cys-138, Cys-261-Cys-373, and Cys-285-Cys-329. Residue Asn-433 is glycosylated (N-linked (GlcNAc...) asparagine). The region spanning 501-552 is the PSI domain; sequence ECGRYQTCLDCVLARDPHCGWDLDTEHCATINSIHRTRSSTVIQSLNDGDAS. 2 cysteine pairs are disulfide-bonded: Cys-502–Cys-519 and Cys-511–Cys-528. The Ig-like C2-type domain occupies 555–640; sequence PAIGVSKPVN…QRKYQTQHVA (86 aa). N-linked (GlcNAc...) asparagine glycans are attached at residues Asn-564 and Asn-612. A disulfide bridge connects residues Cys-577 and Cys-623. The helical transmembrane segment at 665-685 threads the bilayer; sequence LVAMVVILSLVLAALLIWNLY. Over 686-766 the chain is Cytoplasmic; that stretch reads KGHLSLPCLH…LKYIDDESEI (81 aa). Residues 724 to 750 form a disordered region; it reads FNSNNNHANDQRYSSSRETDRLSTTAG.

Belongs to the semaphorin family.

It localises to the membrane. The protein is Semaphorin-4E (sema4e) of Danio rerio (Zebrafish).